A 559-amino-acid chain; its full sequence is 2-isopropylmalate synthase (559 aa).

The 275-residue stretch at 33–307 (PIWCSSDLRD…NPDLDFSDID (275 aa)) folds into the Pyruvate carboxyltransferase domain. Asp42, His246, His248, and Asn282 together coordinate Mg(2+). The interval 439 to 559 (ANTPYALVSH…SLSQPEAKAA (121 aa)) is regulatory domain.

This sequence belongs to the alpha-IPM synthase/homocitrate synthase family. LeuA type 2 subfamily. Homodimer. Mg(2+) serves as cofactor.

Its subcellular location is the cytoplasm. It catalyses the reaction 3-methyl-2-oxobutanoate + acetyl-CoA + H2O = (2S)-2-isopropylmalate + CoA + H(+). Its pathway is amino-acid biosynthesis; L-leucine biosynthesis; L-leucine from 3-methyl-2-oxobutanoate: step 1/4. In terms of biological role, catalyzes the condensation of the acetyl group of acetyl-CoA with 3-methyl-2-oxobutanoate (2-ketoisovalerate) to form 3-carboxy-3-hydroxy-4-methylpentanoate (2-isopropylmalate). The polypeptide is 2-isopropylmalate synthase (Pseudomonas fluorescens (strain Pf0-1)).